A 1252-amino-acid chain; its full sequence is ATP-dependent helicase/nuclease subunit A (1252 aa).

The 484-residue stretch at 6–489 (TNWTEEQKEA…VLLYKNFRSR (484 aa)) folds into the UvrD-like helicase ATP-binding domain. 27–34 (AAAGSGKT) is an ATP binding site. Positions 523–811 (ANYEEIEENL…RIMSIHKSKG (289 aa)) constitute a UvrD-like helicase C-terminal domain.

The protein belongs to the helicase family. AddA subfamily. As to quaternary structure, heterodimer of AddA and AddB/RexB. Mg(2+) serves as cofactor.

It carries out the reaction Couples ATP hydrolysis with the unwinding of duplex DNA by translocating in the 3'-5' direction.. The enzyme catalyses ATP + H2O = ADP + phosphate + H(+). The heterodimer acts as both an ATP-dependent DNA helicase and an ATP-dependent, dual-direction single-stranded exonuclease. Recognizes the chi site generating a DNA molecule suitable for the initiation of homologous recombination. The AddA nuclease domain is required for chi fragment generation; this subunit has the helicase and 3' -&gt; 5' nuclease activities. This Clostridium acetobutylicum (strain ATCC 824 / DSM 792 / JCM 1419 / IAM 19013 / LMG 5710 / NBRC 13948 / NRRL B-527 / VKM B-1787 / 2291 / W) protein is ATP-dependent helicase/nuclease subunit A.